The sequence spans 66 residues: MAKGKDIRIRVILECTTCTRNSVNKKSTGISRYITQKNRHNTPSRLELRKFCRYCYKHTIHGEIKK.

It belongs to the bacterial ribosomal protein bL33 family.

It localises to the plastid. Its subcellular location is the chloroplast. The protein is Large ribosomal subunit protein bL33c of Manihot esculenta (Cassava).